The sequence spans 348 residues: VIP36-like protein (348 aa).

The first 44 residues, 1 to 44 (MAATLGPLGSWQQWRRCLSARDGSRMLLLLLLLGSGQGPQQVGA), serve as a signal peptide directing secretion. At 45–313 (GQTFEYLKRE…APLPPLSGLA (269 aa)) the chain is on the lumenal side. In terms of domain architecture, L-type lectin-like spans 49–274 (EYLKREHSLS…DVISLKLFEL (226 aa)). Residues S93 and D128 each coordinate a carbohydrate. Ca(2+)-binding residues include D159, Y161, and N163. 161–163 (YPN) provides a ligand contact to a carbohydrate. The N-linked (GlcNAc...) (high mannose) asparagine glycan is linked to N181. Residue H188 participates in a carbohydrate binding. A Ca(2+)-binding site is contributed by D191. C200 and C237 are oxidised to a cystine. Residue 258–260 (GDL) coordinates a carbohydrate. A helical transmembrane segment spans residues 314-336 (LFLIVFFSLVFSVFAIVIGIILY). At 337–348 (NKWQEQSRKRFY) the chain is on the cytoplasmic side. The short motif at 344-346 (RKR) is the Endoplasmic reticulum retention signal element.

In terms of tissue distribution, expressed in numerous tissues. Highest expression in skeletal muscle and kidney, intermediate levels in heart, liver and placenta, low levels in brain, thymus, spleen, small intestine and lung.

The protein localises to the endoplasmic reticulum membrane. It is found in the golgi apparatus membrane. Its function is as follows. May be involved in the regulation of export from the endoplasmic reticulum of a subset of glycoproteins. May function as a regulator of ERGIC-53. This is VIP36-like protein (LMAN2L) from Homo sapiens (Human).